We begin with the raw amino-acid sequence, 235 residues long: Ribonuclease PH (235 aa).

Phosphate-binding positions include arginine 86 and 124-126 (GTR).

The protein belongs to the RNase PH family. In terms of assembly, homohexameric ring arranged as a trimer of dimers.

The enzyme catalyses tRNA(n+1) + phosphate = tRNA(n) + a ribonucleoside 5'-diphosphate. In terms of biological role, phosphorolytic 3'-5' exoribonuclease that plays an important role in tRNA 3'-end maturation. Removes nucleotide residues following the 3'-CCA terminus of tRNAs; can also add nucleotides to the ends of RNA molecules by using nucleoside diphosphates as substrates, but this may not be physiologically important. Probably plays a role in initiation of 16S rRNA degradation (leading to ribosome degradation) during starvation. This is Ribonuclease PH from Legionella pneumophila (strain Paris).